A 256-amino-acid chain; its full sequence is Homeobox-leucine zipper protein HOX18 (256 aa).

The tract at residues 52-116 (YDHGRDEEQA…GGGGGGTRKK (65 aa)) is disordered. A compositionally biased stretch (gly residues) spans 102 to 112 (DGGSGGGGGGG). A DNA-binding region (homeobox) is located at residues 112–171 (GTRKKLQLTKEQSTLLEDSFRVHNILSHAQKHELARQLKLKPRQVEVWFQNRRARTKLKQ). The interval 170 to 214 (KQTEVDCEFLKRCCESLTEENKQLKHELMELRRLASPAAAAAGSQ) is leucine-zipper.

This sequence belongs to the HD-ZIP homeobox family. Class II subfamily. In terms of tissue distribution, expressed in roots, leaf sheaths and blades and panicles.

It localises to the nucleus. Its function is as follows. Probable transcription factor. The polypeptide is Homeobox-leucine zipper protein HOX18 (HOX18) (Oryza sativa subsp. japonica (Rice)).